Consider the following 213-residue polypeptide: Orotate phosphoribosyltransferase (213 aa).

K26 lines the 5-phospho-alpha-D-ribose 1-diphosphate pocket. F34–F35 contacts orotate. 5-phospho-alpha-D-ribose 1-diphosphate contacts are provided by residues Y72 to K73, R99, K100, K103, H105, and D124 to A132. Orotate contacts are provided by T128 and R156.

The protein belongs to the purine/pyrimidine phosphoribosyltransferase family. PyrE subfamily. In terms of assembly, homodimer. The cofactor is Mg(2+).

The catalysed reaction is orotidine 5'-phosphate + diphosphate = orotate + 5-phospho-alpha-D-ribose 1-diphosphate. It functions in the pathway pyrimidine metabolism; UMP biosynthesis via de novo pathway; UMP from orotate: step 1/2. Functionally, catalyzes the transfer of a ribosyl phosphate group from 5-phosphoribose 1-diphosphate to orotate, leading to the formation of orotidine monophosphate (OMP). The chain is Orotate phosphoribosyltransferase from Pectobacterium carotovorum subsp. carotovorum (strain PC1).